We begin with the raw amino-acid sequence, 256 residues long: Type III pantothenate kinase (256 aa).

6 to 13 (DVGNSNIV) is a binding site for ATP. Substrate is bound by residues Tyr100 and 107–110 (GADR). The Proton acceptor role is filled by Asp109. Residue Asp129 coordinates K(+). Thr132 is an ATP binding site. Thr184 provides a ligand contact to substrate.

The protein belongs to the type III pantothenate kinase family. In terms of assembly, homodimer. NH4(+) is required as a cofactor. Requires K(+) as cofactor.

The protein localises to the cytoplasm. The catalysed reaction is (R)-pantothenate + ATP = (R)-4'-phosphopantothenate + ADP + H(+). It participates in cofactor biosynthesis; coenzyme A biosynthesis; CoA from (R)-pantothenate: step 1/5. Functionally, catalyzes the phosphorylation of pantothenate (Pan), the first step in CoA biosynthesis. The chain is Type III pantothenate kinase from Geotalea uraniireducens (strain Rf4) (Geobacter uraniireducens).